A 304-amino-acid chain; its full sequence is UDP-3-O-acyl-N-acetylglucosamine deacetylase (304 aa).

Zn(2+) contacts are provided by histidine 78, histidine 237, and aspartate 241. Histidine 264 serves as the catalytic Proton donor.

This sequence belongs to the LpxC family. The cofactor is Zn(2+).

It carries out the reaction a UDP-3-O-[(3R)-3-hydroxyacyl]-N-acetyl-alpha-D-glucosamine + H2O = a UDP-3-O-[(3R)-3-hydroxyacyl]-alpha-D-glucosamine + acetate. It participates in glycolipid biosynthesis; lipid IV(A) biosynthesis; lipid IV(A) from (3R)-3-hydroxytetradecanoyl-[acyl-carrier-protein] and UDP-N-acetyl-alpha-D-glucosamine: step 2/6. In terms of biological role, catalyzes the hydrolysis of UDP-3-O-myristoyl-N-acetylglucosamine to form UDP-3-O-myristoylglucosamine and acetate, the committed step in lipid A biosynthesis. In Nitrosococcus oceani (strain ATCC 19707 / BCRC 17464 / JCM 30415 / NCIMB 11848 / C-107), this protein is UDP-3-O-acyl-N-acetylglucosamine deacetylase.